The sequence spans 263 residues: Putative S-adenosyl-L-methionine-dependent methyltransferase Mkms_0098 (263 aa).

S-adenosyl-L-methionine-binding positions include Asp-121 and 150–151; that span reads ES.

The protein belongs to the UPF0677 family.

Functionally, exhibits S-adenosyl-L-methionine-dependent methyltransferase activity. This is Putative S-adenosyl-L-methionine-dependent methyltransferase Mkms_0098 from Mycobacterium sp. (strain KMS).